The chain runs to 317 residues: Olfactory receptor 2F1 (317 aa).

Residues Met1 to Arg24 lie on the Extracellular side of the membrane. Asn5 is a glycosylation site (N-linked (GlcNAc...) asparagine). Residues Val25–Leu48 traverse the membrane as a helical segment. The Cytoplasmic portion of the chain corresponds to Ile49–Thr57. A helical membrane pass occupies residues Pro58–Pro79. The Extracellular segment spans residues Gln80–Gln100. The cysteines at positions 97 and 189 are disulfide-linked. The chain crosses the membrane as a helical span at residues Leu101–Tyr120. The Cytoplasmic portion of the chain corresponds to Asp121 to Gly139. A helical membrane pass occupies residues Leu140–Thr160. Topologically, residues Ala161 to Met200 are extracellular. The helical transmembrane segment at Val201–Ile222 threads the bilayer. Residues Ser223–Lys236 lie on the Cytoplasmic side of the membrane. A helical transmembrane segment spans residues Ala237–Gln261. Residues Pro262–Lys272 are Extracellular-facing. The helical transmembrane segment at Leu273–Leu292 threads the bilayer. The Cytoplasmic segment spans residues Arg293–Thr317.

This sequence belongs to the G-protein coupled receptor 1 family.

It is found in the cell membrane. In terms of biological role, odorant receptor. The chain is Olfactory receptor 2F1 (OR2F1) from Homo sapiens (Human).